Reading from the N-terminus, the 704-residue chain is Protein polyglycylase TTLL10 (704 aa).

Disordered stretches follow at residues 1 to 32, 46 to 125, and 137 to 170; these read MALH…LPSP, GHRA…SVKE, and DADD…PGQG. Over residues 93-105 the composition is skewed to basic residues; sequence VSSKRSKRSRIHP. Positions 114 to 125 are enriched in basic and acidic residues; sequence THEKQMGSSVKE. The TTL domain maps to 169 to 540; it reads QGPFFYIGGT…TCQKSLHSQK (372 aa). Residues Lys-301, 307–308, 350–353, 363–365, and 406–407 each bind ATP; these read QG, QRYV, KFD, and TN. Gln-307 contributes to the a protein binding site. Mg(2+) is bound by residues Asp-486, Glu-499, and Asn-501. The disordered stretch occupies residues 565 to 704; sequence LASSRPLNRL…EQRSTSHRGS (140 aa). 2 stretches are compositionally biased toward pro residues: residues 576-588 and 596-612; these read NPNP…ANPH and HPHP…PPRP. Low complexity-rich tracts occupy residues 616 to 629 and 654 to 667; these read AASS…AAIS and SDSS…SEPS.

The cofactor is Mg(2+). Highly expressed in testis. Expressed in brain, heart, kidney, liver, lung, muscle and trachea.

The protein localises to the cytoplasm. Its subcellular location is the cytoskeleton. It localises to the cell projection. It is found in the cilium. The protein resides in the cilium axoneme. The catalysed reaction is (glycyl)(n)-glycyl-L-glutamyl-[protein] + glycine + ATP = (glycyl)(n+1)-glycyl-L-glutamyl-[protein] + ADP + phosphate + H(+). Functionally, polyglycylase which modifies both tubulin and non-tubulin proteins, generating polyglycine side chains of variable lengths on the gamma-carboxyl groups of specific glutamate residues of target proteins. Involved in the elongation step rather than the initiation step of the polyglycylation reaction. Polyglycylates alpha-tubulin and beta-tubulin. Polyglycylates non-tubulin proteins such as nucleosome assembly protein NAP1. This is Protein polyglycylase TTLL10 from Mus musculus (Mouse).